A 1574-amino-acid polypeptide reads, in one-letter code: Plexin-C1 (1574 aa).

The signal sequence occupies residues 1 to 34 (MEVSRRKTPPRPPYPAAPLPLIAYLLALAAPARG). The region spanning 35–452 (ADEPVWRSEQ…AGKEVRRIPV (418 aa)) is the Sema domain. The Extracellular segment spans residues 35–950 (ADEPVWRSEQ…YVEQESVPST (916 aa)). A disulfide bond links Cys-64 and Cys-87. N-linked (GlcNAc...) asparagine glycans are attached at residues Asn-86, Asn-143, and Asn-149. An intrachain disulfide couples Cys-156 to Cys-194. Residue Asn-252 is glycosylated (N-linked (GlcNAc...) asparagine). Cys-283 and Cys-329 are oxidised to a cystine. Asn-386 and Asn-407 each carry an N-linked (GlcNAc...) asparagine glycan. Intrachain disulfides connect Cys-455–Cys-472, Cys-461–Cys-506, Cys-464–Cys-481, and Cys-475–Cys-487. N-linked (GlcNAc...) asparagine glycosylation is found at Asn-694, Asn-773, and Asn-802. A helical transmembrane segment spans residues 951 to 971 (WYFLIALPILLAIVIVVAVVV). Residues 972–1574 (TRYKSKELSR…FDEKKKCKWM (603 aa)) lie on the Cytoplasmic side of the membrane. Ser-984 is modified (phosphoserine).

This sequence belongs to the plexin family. Monomer. Homodimer. Interacts with SEMA7A. As to expression, detected on dendritic cells, skin Langerhans cells and neutrophils (at protein level).

Its subcellular location is the membrane. Receptor for SEMA7A, for vaccinia virus semaphorin A39R and for herpesvirus Sema protein. Binding of semaphorins triggers cellular responses leading to the rearrangement of the cytoskeleton and to secretion of IL6 and IL8. In Mus musculus (Mouse), this protein is Plexin-C1 (Plxnc1).